The primary structure comprises 363 residues: 3,4-dihydroxy-2-butanone 4-phosphate synthase (363 aa).

The segment at 1–201 (MTLSTAQEII…VADLIEYRNK (201 aa)) is DHBP synthase. D-ribulose 5-phosphate contacts are provided by residues 27 to 28 (RE), aspartate 32, 140 to 144 (RAGHT), and glutamate 164. A Mg(2+)-binding site is contributed by glutamate 28. Histidine 143 is a Mg(2+) binding site. Positions 202 to 363 (YETMIERISE…GLEIVEYVCS (162 aa)) are GTP cyclohydrolase II-like.

It in the N-terminal section; belongs to the DHBP synthase family. The protein in the C-terminal section; belongs to the GTP cyclohydrolase II family. It depends on Mg(2+) as a cofactor. Mn(2+) is required as a cofactor.

It catalyses the reaction D-ribulose 5-phosphate = (2S)-2-hydroxy-3-oxobutyl phosphate + formate + H(+). It functions in the pathway cofactor biosynthesis; riboflavin biosynthesis; 2-hydroxy-3-oxobutyl phosphate from D-ribulose 5-phosphate: step 1/1. Its function is as follows. Catalyzes the conversion of D-ribulose 5-phosphate to formate and 3,4-dihydroxy-2-butanone 4-phosphate. This Photobacterium phosphoreum protein is 3,4-dihydroxy-2-butanone 4-phosphate synthase (ribB).